Reading from the N-terminus, the 1017-residue chain is DNA polymerase (1017 aa).

The protein belongs to the DNA polymerase type-B family. In terms of assembly, heterodimer with the terminal protein; this heterodimer binds to bp 9 to 18 of the genome. Forms a complex with viral pTP, DBP and hosts NFIA and POU2F1/OCT1 for initiation of replication.

The protein resides in the host nucleus. The enzyme catalyses DNA(n) + a 2'-deoxyribonucleoside 5'-triphosphate = DNA(n+1) + diphosphate. In terms of biological role, eukaryotic-type DNA polymerase involved in viral genomic replication. DNA synthesis is protein primed, and acts in a strand displacement replication. Assembles in complex with viral pTP, DBP, host NFIA and host POU2F1/OCT1 on viral origin of replication. The polymerase covalently transfers dCMP onto pTP, thereby initiating complementary strand synthesis. The protein is DNA polymerase of Bovine adenovirus 2 (BAdV-2).